Consider the following 323-residue polypeptide: Transmembrane protein 171 (323 aa).

Transmembrane regions (helical) follow at residues 22 to 42 (IFFL…ISIF), 57 to 77 (MVLK…VILA), 112 to 132 (LIFG…GIWV), and 159 to 179 (FLSL…FFVV). Residues 251-268 (YSSLFNLSRTPTPENQGA) show a composition bias toward polar residues. Positions 251-323 (YSSLFNLSRT…LGAPSESSPP (73 aa)) are disordered. A compositionally biased stretch (low complexity) spans 281–290 (SGPGSSSESS).

The protein resides in the membrane. In Rattus norvegicus (Rat), this protein is Transmembrane protein 171 (Tmem171).